Reading from the N-terminus, the 432-residue chain is Phosphomethylpyrimidine synthase (432 aa).

Substrate contacts are provided by residues N66, M95, Y124, H163, 185–187 (SRG), 226–229 (DGLR), and E265. Zn(2+) is bound at residue H269. Y292 contributes to the substrate binding site. H333 contributes to the Zn(2+) binding site. 3 residues coordinate [4Fe-4S] cluster: C409, C412, and C416.

It belongs to the ThiC family. It depends on [4Fe-4S] cluster as a cofactor.

The enzyme catalyses 5-amino-1-(5-phospho-beta-D-ribosyl)imidazole + S-adenosyl-L-methionine = 4-amino-2-methyl-5-(phosphooxymethyl)pyrimidine + CO + 5'-deoxyadenosine + formate + L-methionine + 3 H(+). The protein operates within cofactor biosynthesis; thiamine diphosphate biosynthesis. Functionally, catalyzes the synthesis of the hydroxymethylpyrimidine phosphate (HMP-P) moiety of thiamine from aminoimidazole ribotide (AIR) in a radical S-adenosyl-L-methionine (SAM)-dependent reaction. The chain is Phosphomethylpyrimidine synthase from Desulfitobacterium hafniense (strain DSM 10664 / DCB-2).